A 345-amino-acid chain; its full sequence is Phosphate acyltransferase (345 aa).

It belongs to the PlsX family. Homodimer. Probably interacts with PlsY.

Its subcellular location is the cytoplasm. It carries out the reaction a fatty acyl-[ACP] + phosphate = an acyl phosphate + holo-[ACP]. The protein operates within lipid metabolism; phospholipid metabolism. Its function is as follows. Catalyzes the reversible formation of acyl-phosphate (acyl-PO(4)) from acyl-[acyl-carrier-protein] (acyl-ACP). This enzyme utilizes acyl-ACP as fatty acyl donor, but not acyl-CoA. The sequence is that of Phosphate acyltransferase from Wolbachia sp. subsp. Brugia malayi (strain TRS).